Consider the following 578-residue polypeptide: Probable actinorhodin transporter (578 aa).

A disordered region spans residues 1 to 33 (MSSVEADEPDRATAPPSALLPEDGPGPDGTAAG). Transmembrane regions (helical) follow at residues 78 to 98 (VIQW…VVGG), 109 to 129 (MFVV…VAAG), 135 to 155 (AARF…LGLI), 170 to 190 (AFGP…GFLV), 202 to 222 (VFLI…LLLP), 232 to 252 (FDVV…FPLV), 259 to 279 (WPAW…GFVA), 306 to 326 (GLAV…LLAL), 341 to 361 (LTMT…GAVL), 369 to 389 (ALHG…LTIG), 444 to 464 (LGFT…LGSQ), and 546 to 566 (AMVR…ALAF).

This sequence belongs to the major facilitator superfamily. EmrB family.

Its subcellular location is the cell membrane. Promotes the efflux of actinorhodin. The protein is Probable actinorhodin transporter (actII-2) of Streptomyces coelicolor (strain ATCC BAA-471 / A3(2) / M145).